A 665-amino-acid polypeptide reads, in one-letter code: UvrABC system protein C (665 aa).

Positions 16 to 95 constitute a GIY-YIG domain; that stretch reads ESPGVYRFRD…IKQYDPRFNV (80 aa). One can recognise a UVR domain in the interval 208–243; the sequence is DLMVRRLEREMADASAELEFERAARLRDDLAALRRA. The disordered stretch occupies residues 470–507; sequence EAGVESAGDPATPAGPASTGPGVPDEPRVGTLVDPTTG. Low complexity predominate over residues 475-491; that stretch reads SAGDPATPAGPASTGPG.

This sequence belongs to the UvrC family. Interacts with UvrB in an incision complex.

The protein resides in the cytoplasm. In terms of biological role, the UvrABC repair system catalyzes the recognition and processing of DNA lesions. UvrC both incises the 5' and 3' sides of the lesion. The N-terminal half is responsible for the 3' incision and the C-terminal half is responsible for the 5' incision. The protein is UvrABC system protein C of Salinispora tropica (strain ATCC BAA-916 / DSM 44818 / JCM 13857 / NBRC 105044 / CNB-440).